The primary structure comprises 1667 residues: Myomesin-1 (1667 aa).

2 positions are modified to phosphoserine: Ser124 and Ser142. Over residues 192–210 the composition is skewed to low complexity; the sequence is SKQSTASKQSATSKRTTST. Positions 192–217 are disordered; sequence SKQSTASKQSATSKRTTSTLQREETF. 2 Ig-like C2-type domains span residues 258–349 and 376–478; these read PEFI…ASVV and PYGY…AYVF. 3 Fibronectin type-III domains span residues 492–587, 620–714, and 721–814; these read APLD…ALDP, PPTD…VVGD, and APGK…VKAA. The interval 818–915 is disordered; the sequence is GVSPDVWPQL…PKKKKDPVAV (98 aa). A phosphoserine mark is found at Ser863 and Ser867. A compositionally biased stretch (low complexity) spans 885-894; sequence EPLSSPPQEA. Fibronectin type-III domains lie at 918–1016 and 1023–1122; these read APYD…CEEW and PPHS…TRPG. Residue Ser1036 is modified to Phosphoserine. 3 Ig-like C2-type domains span residues 1114-1212, 1340-1426, and 1555-1644; these read PVVA…EEMK, PHFA…LKLV, and RVLG…FTVS.

As to quaternary structure, homodimer. Interacts with TTN/titin and PNKD. In terms of tissue distribution, ubiquitously expressed in all striated muscles. Expressed in all fiber types.

Its subcellular location is the cytoplasm. The protein localises to the myofibril. The protein resides in the sarcomere. It localises to the m line. May link the intermediate filament cytoskeleton to the M-disk of the myofibrils in striated muscle. May also contact myosin filaments. Also binds beta-integrins. This Mus musculus (Mouse) protein is Myomesin-1 (Myom1).